The sequence spans 452 residues: Chloride/fluoride channel protein (452 aa).

The next 10 membrane-spanning stretches (helical) occupy residues 23 to 43 (WLALAGLVALLAGSASALFLL), 57 to 77 (WVIWLLPVAGFAVGLAYHLIG), 97 to 117 (IVPLRMVPMVLIGTVVSHLFG), 160 to 180 (FASVFGTPLAGALFGLEVLAI), 188 to 208 (LFPCVVAAIVADQVGQAWGVV), 222 to 242 (LWSVMAVVAAGIVFGLTGLLF), 264 to 284 (PFAGGLLIAVAVWALGSNHYI), 315 to 337 (VFTVVSLGTGFKGGEVTPLFYIG), 344 to 364 (LAPLLHLPFGMLAGIGFVAVF), and 386 to 408 (IAPLAAIACIASYLVSGHTGIYH).

Belongs to the chloride channel (TC 2.A.49) family.

Its subcellular location is the cell membrane. Functionally, transports chloride and fluoride with similar efficiency. The polypeptide is Chloride/fluoride channel protein (eriC) (Pseudomonas syringae pv. tomato (strain ATCC BAA-871 / DC3000)).